Reading from the N-terminus, the 153-residue chain is Putative WASP homolog-associated protein with actin, membranes and microtubules-like protein 1 (153 aa).

Residues 113–151 (AIQFYEIQLELYEVKFEILKNKEILLTTQLDSLERLIKD) are a coiled coil.

The protein is Putative WASP homolog-associated protein with actin, membranes and microtubules-like protein 1 (WHAMMP3) of Homo sapiens (Human).